Consider the following 46-residue polypeptide: Protein YmiA (46 aa).

A helical transmembrane segment spans residues 22 to 42 (AWLAVFLGSALFWVVVALLIW).

It is found in the cell inner membrane. In Escherichia coli (strain K12), this protein is Protein YmiA (ymiA).